The sequence spans 106 residues: Nucleoid-associated protein Smal_0858 (106 aa).

Positions 81–106 are disordered; the sequence is IDAESKSKMGSATAGMQLPPGMKLPF.

This sequence belongs to the YbaB/EbfC family. In terms of assembly, homodimer.

It localises to the cytoplasm. The protein localises to the nucleoid. In terms of biological role, binds to DNA and alters its conformation. May be involved in regulation of gene expression, nucleoid organization and DNA protection. This Stenotrophomonas maltophilia (strain R551-3) protein is Nucleoid-associated protein Smal_0858.